A 332-amino-acid polypeptide reads, in one-letter code: Terpene synthase 1 (332 aa).

The short motif at 81-86 (DDGLDA) is the DDxx(x)D/E motif element. The NDxxSxxxD/E motif motif lies at 221 to 229 (NDLVSYEKE).

The protein belongs to the terpene synthase family.

It carries out the reaction (2E,6E)-farnesyl diphosphate = (2S,3R,6S,9S)-(-)-protoillud-7-ene + diphosphate. Functionally, terpene synthase that converts its substrate farnesyl diphosphate (FPP) into the sesquiterpene protoillud-7-ene. The chain is Terpene synthase 1 from Acytostelium subglobosum (Slime mold).